A 393-amino-acid polypeptide reads, in one-letter code: Chalcone synthase G (393 aa).

C164 is an active-site residue.

The protein belongs to the thiolase-like superfamily. Chalcone/stilbene synthases family. In terms of tissue distribution, expressed in seedlings after illumination with UV light. No expression detectable in flowers. It is not known for sure whether CHSG encodes a chalcone synthase or a very closely related condensing enzyme.

The enzyme catalyses (E)-4-coumaroyl-CoA + 3 malonyl-CoA + 3 H(+) = 2',4,4',6'-tetrahydroxychalcone + 3 CO2 + 4 CoA. It participates in secondary metabolite biosynthesis; flavonoid biosynthesis. The primary product of this enzyme is 4,2',4',6'-tetrahydroxychalcone (also termed naringenin-chalcone or chalcone) which can under specific conditions spontaneously isomerize into naringenin. The chain is Chalcone synthase G (CHSG) from Petunia hybrida (Petunia).